Reading from the N-terminus, the 456-residue chain is UDP-N-acetylmuramoylalanine--D-glutamate ligase (456 aa).

113–119 lines the ATP pocket; the sequence is GTNGKTT.

It belongs to the MurCDEF family.

It localises to the cytoplasm. The catalysed reaction is UDP-N-acetyl-alpha-D-muramoyl-L-alanine + D-glutamate + ATP = UDP-N-acetyl-alpha-D-muramoyl-L-alanyl-D-glutamate + ADP + phosphate + H(+). The protein operates within cell wall biogenesis; peptidoglycan biosynthesis. In terms of biological role, cell wall formation. Catalyzes the addition of glutamate to the nucleotide precursor UDP-N-acetylmuramoyl-L-alanine (UMA). This is UDP-N-acetylmuramoylalanine--D-glutamate ligase from Rippkaea orientalis (strain PCC 8801 / RF-1) (Cyanothece sp. (strain PCC 8801)).